The following is a 477-amino-acid chain: Membrane-bound lytic murein transglycosylase F (477 aa).

Positions 1 to 22 are cleaved as a signal peptide; sequence MTRFLLIIILGFLLTACQQVTV. The non-LT domain stretch occupies residues 23-257; sequence DEPEFVPHQL…HLNEKYFGHV (235 aa). Residues 258–477 are LT domain; sequence KRFDYIDTRA…AGSLSPDQPK (220 aa). The active site involves glutamate 302. The interval 446–477 is disordered; it reads SKQPMPEDEQNDLIAEELPSMPAGSLSPDQPK. The span at 451 to 460 shows a compositional bias: acidic residues; sequence PEDEQNDLIA.

The protein in the N-terminal section; belongs to the bacterial solute-binding protein 3 family. It in the C-terminal section; belongs to the transglycosylase Slt family.

It localises to the cell outer membrane. The catalysed reaction is Exolytic cleavage of the (1-&gt;4)-beta-glycosidic linkage between N-acetylmuramic acid (MurNAc) and N-acetylglucosamine (GlcNAc) residues in peptidoglycan, from either the reducing or the non-reducing ends of the peptidoglycan chains, with concomitant formation of a 1,6-anhydrobond in the MurNAc residue.. Its function is as follows. Murein-degrading enzyme that degrades murein glycan strands and insoluble, high-molecular weight murein sacculi, with the concomitant formation of a 1,6-anhydromuramoyl product. Lytic transglycosylases (LTs) play an integral role in the metabolism of the peptidoglycan (PG) sacculus. Their lytic action creates space within the PG sacculus to allow for its expansion as well as for the insertion of various structures such as secretion systems and flagella. The sequence is that of Membrane-bound lytic murein transglycosylase F from Shewanella sp. (strain W3-18-1).